Consider the following 443-residue polypeptide: ATP-dependent protease ATPase subunit HslU (443 aa).

Residues Ile18, 60–65 (GVGKTE), Asp256, Glu321, and Arg393 each bind ATP.

The protein belongs to the ClpX chaperone family. HslU subfamily. As to quaternary structure, a double ring-shaped homohexamer of HslV is capped on each side by a ring-shaped HslU homohexamer. The assembly of the HslU/HslV complex is dependent on binding of ATP.

Its subcellular location is the cytoplasm. Functionally, ATPase subunit of a proteasome-like degradation complex; this subunit has chaperone activity. The binding of ATP and its subsequent hydrolysis by HslU are essential for unfolding of protein substrates subsequently hydrolyzed by HslV. HslU recognizes the N-terminal part of its protein substrates and unfolds these before they are guided to HslV for hydrolysis. The sequence is that of ATP-dependent protease ATPase subunit HslU from Escherichia coli O139:H28 (strain E24377A / ETEC).